The chain runs to 1574 residues: Synaptojanin-1 (1574 aa).

An SAC domain is found at 119–442 (VRKVLNSGNF…GDSISKIYAG (324 aa)). 2 positions are modified to phosphoserine: Ser-820 and Ser-830. Residues 894–971 (GTVLVSIKSS…RTITITLKSP (78 aa)) enclose the RRM domain. A compositionally biased stretch (low complexity) spans 1029–1054 (HLQPSSSSGLGTSPSSSPRTSPCQSP). The segment at 1029 to 1327 (HLQPSSSSGL…GVKQEPTLKS (299 aa)) is disordered. Ser-1053 carries the post-translational modification Phosphoserine. The span at 1080-1100 (SSQGSPVDTQPAAQKDSSQTL) shows a compositional bias: polar residues. Positions 1105-1127 (PPPPRPVAPPARPAPPQRPPPPS) are enriched in pro residues. Residues Ser-1147 and Ser-1175 each carry the phosphoserine modification. Arg-1198 is subject to Omega-N-methylarginine. Phosphothreonine is present on Thr-1217. The span at 1268-1287 (TMPPSGPQPNLETPPQPPPR) shows a compositional bias: pro residues. Low complexity predominate over residues 1288–1307 (SRSSQSLPSDSSPQLQQEQP). A phosphoserine mark is found at Ser-1290 and Ser-1350. At Thr-1354 the chain carries Phosphothreonine. Disordered stretches follow at residues 1363–1507 (LPSA…SVCP) and 1532–1574 (LPAR…FTER). 4 stretches are compositionally biased toward polar residues: residues 1364 to 1379 (PSAS…SVSC), 1393 to 1402 (QESMGSSANP), 1424 to 1436 (RVQS…TSWL), and 1472 to 1484 (DLQS…TSNP). The segment at 1403 to 1425 (FPSLPCRNPFTDRTAAPGNPFRV) is 3 X 3 AA repeats of N-P-F. Over residues 1535-1548 (RRPPPPPPPVPLLP) the composition is skewed to pro residues. Residues 1549–1563 (PGTTSSAGPSTTLPS) are compositionally biased toward low complexity. Residues 1565–1574 (APSTLDFTER) are compositionally biased toward polar residues.

Belongs to the synaptojanin family. It in the central section; belongs to the inositol 1,4,5-trisphosphate 5-phosphatase family. Interacts with ASH/GRB2. Interacts with PACSIN1, PACSIN2 and PACSIN3. Interacts with AMPH, SH3GL1, SH3GL2 and SH3GL3. Interacts with MYO1E (via SH3 domain). Interacts with BIN1 and DNM1. Interacts with EPS15.

It localises to the cytoplasm. The protein resides in the perinuclear region. It catalyses the reaction a 1,2-diacyl-sn-glycero-3-phospho-(1D-myo-inositol-4,5-bisphosphate) + H2O = a 1,2-diacyl-sn-glycero-3-phospho-(1D-myo-inositol 4-phosphate) + phosphate. In terms of biological role, phosphatase that acts on various phosphoinositides, including phosphatidylinositol 4-phosphate, phosphatidylinositol (4,5)-bisphosphate and phosphatidylinositol (3,4,5)-trisphosphate. Has a role in clathrin-mediated endocytosis. Hydrolyzes PIP2 bound to actin regulatory proteins resulting in the rearrangement of actin filaments downstream of tyrosine kinase and ASH/GRB2. This chain is Synaptojanin-1 (Synj1), found in Mus musculus (Mouse).